A 215-amino-acid chain; its full sequence is Phosphatidylserine decarboxylase proenzyme (215 aa).

The active-site Schiff-base intermediate with substrate; via pyruvic acid is the Ser-184. Position 184 is a pyruvic acid (Ser); by autocatalysis (Ser-184).

Belongs to the phosphatidylserine decarboxylase family. PSD-A subfamily. As to quaternary structure, heterodimer of a large membrane-associated beta subunit and a small pyruvoyl-containing alpha subunit. It depends on pyruvate as a cofactor. In terms of processing, is synthesized initially as an inactive proenzyme. Formation of the active enzyme involves a self-maturation process in which the active site pyruvoyl group is generated from an internal serine residue via an autocatalytic post-translational modification. Two non-identical subunits are generated from the proenzyme in this reaction, and the pyruvate is formed at the N-terminus of the alpha chain, which is derived from the carboxyl end of the proenzyme. The post-translation cleavage follows an unusual pathway, termed non-hydrolytic serinolysis, in which the side chain hydroxyl group of the serine supplies its oxygen atom to form the C-terminus of the beta chain, while the remainder of the serine residue undergoes an oxidative deamination to produce ammonia and the pyruvoyl prosthetic group on the alpha chain.

The protein localises to the cell membrane. The enzyme catalyses a 1,2-diacyl-sn-glycero-3-phospho-L-serine + H(+) = a 1,2-diacyl-sn-glycero-3-phosphoethanolamine + CO2. It participates in phospholipid metabolism; phosphatidylethanolamine biosynthesis; phosphatidylethanolamine from CDP-diacylglycerol: step 2/2. In terms of biological role, catalyzes the formation of phosphatidylethanolamine (PtdEtn) from phosphatidylserine (PtdSer). The polypeptide is Phosphatidylserine decarboxylase proenzyme (Aromatoleum aromaticum (strain DSM 19018 / LMG 30748 / EbN1) (Azoarcus sp. (strain EbN1))).